We begin with the raw amino-acid sequence, 442 residues long: MDLLLGVLSSGILQNALPFVAGVGRVKRPKRVKLEEAFREAHLCRPVIPYRAPTPYTGGRVKALFVGINYTGTRNKLSGCVNDVRQMLGTLQRIQFPISECCILVDDMRFPNFTALPTRENIIKHMAWLVHDVRPGDVLFFHYSGHGTETKAERDSEELYDQCLVPLDYQVQGAILDDDLFELLVKGLPAGVRMTAVFDCCHSASLLDLPFAFVGNNNFYSGGRHEMRKVRANNFSMGDVVVFSGCDDSGTSADVSNVSSFGSGLVASGGAATQALTWALVNTSQLSYADIFIRTREILRQKGYKQVPQLSSSKPVDLYKPFSLFGPITVNTSLIHYVPQQYLQPWGPPQPYYPPPQPQQPYYPPPQPQQPYYPSSQLPTQYNNLAPTAGIPLMTSSSEVPPGQYPQALSGDQNGGVPPQYPSDQSTYYSSAQYLSGVGKPL.

The signal sequence occupies residues 1–18 (MDLLLGVLSSGILQNALP). Residues 19–62 (FVAGVGRVKRPKRVKLEEAFREAHLCRPVIPYRAPTPYTGGRVK) form an important for catalytic activity region. 2 N-linked (GlcNAc...) asparagine glycosylation sites follow: Asn69 and Asn112. His146 is a catalytic residue. Ca(2+) is bound by residues Asp161, Asp177, and Asp178. Residue Cys201 is part of the active site. Asp208 lines the Ca(2+) pocket. N-linked (GlcNAc...) asparagine glycans are attached at residues Asn234, Asn257, Asn282, and Asn331. The segment at 336–442 (HYVPQQYLQP…QYLSGVGKPL (107 aa)) is negatively regulates catalytic activity. The span at 348 to 371 (PPQPYYPPPQPQQPYYPPPQPQQP) shows a compositional bias: pro residues. The disordered stretch occupies residues 348 to 442 (PPQPYYPPPQ…QYLSGVGKPL (95 aa)). Over residues 372-382 (YYPSSQLPTQY) the composition is skewed to low complexity. Polar residues predominate over residues 422–434 (PSDQSTYYSSAQY).

It belongs to the peptidase C14B family. In epimastigotes, the unprocessed enzyme appears to be the main form. Auto-processing is dispensable for catalytic activity towards small oligopeptide substrates.

Its subcellular location is the recycling endosome. Activated by Ca(2+). In terms of biological role, cysteine protease that cleaves specifically after arginine or lysine residues. May play a role in apoptosis. The protein is Metacaspase-5 of Trypanosoma cruzi (strain CL Brener).